A 121-amino-acid chain; its full sequence is Large ribosomal subunit protein uL14 (121 aa).

This sequence belongs to the universal ribosomal protein uL14 family. In terms of assembly, part of the 50S ribosomal subunit. Forms a cluster with proteins L3 and L19. In the 70S ribosome, L14 and L19 interact and together make contacts with the 16S rRNA in bridges B5 and B8.

Binds to 23S rRNA. Forms part of two intersubunit bridges in the 70S ribosome. This Azobacteroides pseudotrichonymphae genomovar. CFP2 protein is Large ribosomal subunit protein uL14.